We begin with the raw amino-acid sequence, 508 residues long: Cytochrome P450 monooxygenase orf4 (508 aa).

Cys447 is a heme binding site.

It belongs to the cytochrome P450 family. Heme is required as a cofactor.

Its pathway is mycotoxin biosynthesis. Cytochrome P450 monooxygenase; part of the gene cluster that mediates the biosynthesis of brefeldin A (BFA), a protein transport inhibitor that shows antiviral, antifungal, and antitumor properties. The proposed biosynthesis of BFA involves formation of an acyclic polyketide chain that is differentially tailored throughout the backbone. The highly reducing polyketide synthase Bref-PKS is proposed to synthesize the precisely reduced octaketide precursor, which could then be directly offloaded by the thiohydrolase enzyme Bref-TH followed by a cytochrome P450 monooxygenase-mediated formation of the cyclopentane ring and macrocyclization to afford 7-deoxy BFA. Alternatively, the first ring annulation can also occur on the ACP-tethered intermediate before the thiohydrolase release and lactonization. The C7-hydroxylation by another cytochrome P450 monooxygenase is believed to be the final step in the process to obtain the final structure of BFA. In addition to the HRPKS Bref-PKS and the thiohydrolase Bref-TH, the brefeldin A biosynthesis cluster contains 4 cytochrome p450 monooxygenases (called orf3 to orf6), as well a the probable cluster-specific transcription regulator orf8. The sequence is that of Cytochrome P450 monooxygenase orf4 from Eupenicillium brefeldianum (Penicillium brefeldianum).